We begin with the raw amino-acid sequence, 881 residues long: Valine--tRNA ligase (881 aa).

Residues 48–58 (PNITGKLHLGH) carry the 'HIGH' region motif. The short motif at 527–531 (KMSKS) is the 'KMSKS' region element. K530 contacts ATP. Coiled coils occupy residues 721–747 (KNET…AEMN) and 811–881 (LLDL…AALK).

Belongs to the class-I aminoacyl-tRNA synthetase family. ValS type 1 subfamily. In terms of assembly, monomer.

The protein localises to the cytoplasm. It catalyses the reaction tRNA(Val) + L-valine + ATP = L-valyl-tRNA(Val) + AMP + diphosphate. In terms of biological role, catalyzes the attachment of valine to tRNA(Val). As ValRS can inadvertently accommodate and process structurally similar amino acids such as threonine, to avoid such errors, it has a 'posttransfer' editing activity that hydrolyzes mischarged Thr-tRNA(Val) in a tRNA-dependent manner. In Clostridium acetobutylicum (strain ATCC 824 / DSM 792 / JCM 1419 / IAM 19013 / LMG 5710 / NBRC 13948 / NRRL B-527 / VKM B-1787 / 2291 / W), this protein is Valine--tRNA ligase.